The following is a 64-amino-acid chain: Large ribosomal subunit protein uL29 (64 aa).

It belongs to the universal ribosomal protein uL29 family.

The chain is Large ribosomal subunit protein uL29 from Acaryochloris marina (strain MBIC 11017).